The chain runs to 290 residues: Nucleotide-binding protein BPP4038 (290 aa).

9-16 (GISGSGKS) is a binding site for ATP. 58-61 (DVRS) serves as a coordination point for GTP.

It belongs to the RapZ-like family.

Its function is as follows. Displays ATPase and GTPase activities. This is Nucleotide-binding protein BPP4038 from Bordetella parapertussis (strain 12822 / ATCC BAA-587 / NCTC 13253).